A 662-amino-acid polypeptide reads, in one-letter code: Serine/threonine-protein kinase PTK1/STK1 (662 aa).

A disordered region spans residues 35-119 (GNKLKKKASL…SSTSRNLSNS (85 aa)). Low complexity predominate over residues 50–60 (STSTNDSESSS). Composition is skewed to polar residues over residues 61–91 (PKLP…SAST) and 98–119 (GSST…LSNS). A Protein kinase domain is found at 196 to 503 (DDENKTIGWG…IDDLFEDPWF (308 aa)). Residues 202 to 210 (IGWGGSCEV) and K226 each bind ATP. Catalysis depends on D329, which acts as the Proton acceptor. The segment at 605–631 (TLTLSEEPPATPAPSAPSAPSARVRGH) is disordered.

The protein belongs to the protein kinase superfamily. Ser/Thr protein kinase family.

It carries out the reaction L-seryl-[protein] + ATP = O-phospho-L-seryl-[protein] + ADP + H(+). It catalyses the reaction L-threonyl-[protein] + ATP = O-phospho-L-threonyl-[protein] + ADP + H(+). Its function is as follows. Essential determinant for low-affinity spermidine transport. The polypeptide is Serine/threonine-protein kinase PTK1/STK1 (PTK1) (Saccharomyces cerevisiae (strain ATCC 204508 / S288c) (Baker's yeast)).